Here is a 507-residue protein sequence, read N- to C-terminus: Arabinose import ATP-binding protein AraG (507 aa).

ABC transporter domains follow at residues 14–249 (LRFN…MVGR) and 249–505 (RDIQ…LPRT). 46–53 (GENGAGKS) contacts ATP.

The protein belongs to the ABC transporter superfamily. Arabinose importer (TC 3.A.1.2.2) family. In terms of assembly, the complex is composed of two ATP-binding proteins (AraG), two transmembrane proteins (AraH) and a solute-binding protein (AraF).

The protein resides in the cell inner membrane. It carries out the reaction L-arabinose(out) + ATP + H2O = L-arabinose(in) + ADP + phosphate + H(+). In terms of biological role, part of the ABC transporter complex AraFGH involved in arabinose import. Responsible for energy coupling to the transport system. This Pseudomonas savastanoi pv. phaseolicola (strain 1448A / Race 6) (Pseudomonas syringae pv. phaseolicola (strain 1448A / Race 6)) protein is Arabinose import ATP-binding protein AraG.